A 493-amino-acid chain; its full sequence is NAD(P)H dehydrogenase (quinone) (493 aa).

FAD contacts are provided by residues Pro12–Ala13, Asp35–Asp37, Ala42–Ala43, Lys52, Gly117, Asp317, Leu324–Ala325, and Tyr450.

This sequence belongs to the class-I pyridine nucleotide-disulfide oxidoreductase family. Homotetramer. Requires FAD as cofactor.

The catalysed reaction is a quinone + NADH + H(+) = a quinol + NAD(+). The enzyme catalyses a quinone + NADPH + H(+) = a quinol + NADP(+). May contribute to virulence by increasing resistance to reactive oxygen intermediates. It can reduce 2,6-dimethyl-1,4-benzoquinone (DMBQ), 5-hydroxy-1,4-naphthaquinone (5-HNQ) and menadione. The protein is NAD(P)H dehydrogenase (quinone) (lpdA) of Mycobacterium tuberculosis (strain CDC 1551 / Oshkosh).